A 188-amino-acid chain; its full sequence is Elongation factor P (188 aa).

The residue at position 34 (lysine 34) is an N6-(3,6-diaminohexanoyl)-5-hydroxylysine.

This sequence belongs to the elongation factor P family. May be beta-lysylated on the epsilon-amino group of Lys-34 by the combined action of EpmA and EpmB, and then hydroxylated on the C5 position of the same residue by EpmC (if this protein is present). Lysylation is critical for the stimulatory effect of EF-P on peptide-bond formation. The lysylation moiety may extend toward the peptidyltransferase center and stabilize the terminal 3-CCA end of the tRNA. Hydroxylation of the C5 position on Lys-34 may allow additional potential stabilizing hydrogen-bond interactions with the P-tRNA.

It is found in the cytoplasm. It participates in protein biosynthesis; polypeptide chain elongation. Functionally, involved in peptide bond synthesis. Alleviates ribosome stalling that occurs when 3 or more consecutive Pro residues or the sequence PPG is present in a protein, possibly by augmenting the peptidyl transferase activity of the ribosome. Modification of Lys-34 is required for alleviation. The protein is Elongation factor P of Pectobacterium carotovorum subsp. carotovorum (strain PC1).